A 189-amino-acid chain; its full sequence is Recombination protein RecR (189 aa).

The segment at 48-63 (CQTCFHLSAEPLCDIC) adopts a C4-type zinc-finger fold. A Toprim domain is found at 71–165 (QLLCVVADSR…QVSRIAYGLP (95 aa)).

The protein belongs to the RecR family.

Its function is as follows. May play a role in DNA repair. It seems to be involved in an RecBC-independent recombinational process of DNA repair. It may act with RecF and RecO. The sequence is that of Recombination protein RecR from Prochlorococcus marinus (strain MIT 9303).